A 493-amino-acid polypeptide reads, in one-letter code: Serine/threonine-protein kinase chk-1 (493 aa).

Residues 26-286 (YRVIRTLGEG…IEQIKTDPWF (261 aa)) enclose the Protein kinase domain. ATP is bound by residues 32–40 (LGEGAFGEV) and lysine 56. Aspartate 150 serves as the catalytic Proton acceptor. Residues 308-348 (DENSPDCNISSTQQADAVSTAKRRHLETPDKVAHVERQNAS) form a disordered region. A compositionally biased stretch (polar residues) spans 312–324 (PDCNISSTQQADA). Basic and acidic residues predominate over residues 333-344 (LETPDKVAHVER).

This sequence belongs to the protein kinase superfamily. CAMK Ser/Thr protein kinase family. NIM1 subfamily.

It is found in the cytoplasm. The protein resides in the nucleus. It carries out the reaction L-seryl-[protein] + ATP = O-phospho-L-seryl-[protein] + ADP + H(+). It catalyses the reaction L-threonyl-[protein] + ATP = O-phospho-L-threonyl-[protein] + ADP + H(+). In terms of biological role, serine/threonine-protein kinase which is required for checkpoint-mediated cell cycle arrest and activation of DNA repair in response to the presence of DNA damage or unreplicated DNA. May also negatively regulate cell cycle progression during unperturbed cell cycles. Required for checkpoint mediated cell cycle arrest in response to DNA damage in germline cells. Essential for embryogenesis. The protein is Serine/threonine-protein kinase chk-1 (chk-1) of Caenorhabditis briggsae.